The following is a 236-amino-acid chain: Orotidine 5'-phosphate decarboxylase (236 aa).

Substrate-binding positions include Asp-17, Lys-39, 66 to 75, Thr-125, Arg-186, Gln-195, Gly-215, and Arg-216; that span reads DLKFHDIPNT. The active-site Proton donor is Lys-68.

This sequence belongs to the OMP decarboxylase family. Type 1 subfamily. As to quaternary structure, homodimer.

The catalysed reaction is orotidine 5'-phosphate + H(+) = UMP + CO2. Its pathway is pyrimidine metabolism; UMP biosynthesis via de novo pathway; UMP from orotate: step 2/2. In terms of biological role, catalyzes the decarboxylation of orotidine 5'-monophosphate (OMP) to uridine 5'-monophosphate (UMP). This Buchnera aphidicola subsp. Acyrthosiphon pisum (strain APS) (Acyrthosiphon pisum symbiotic bacterium) protein is Orotidine 5'-phosphate decarboxylase.